Here is a 399-residue protein sequence, read N- to C-terminus: Lymphoid enhancer-binding factor 1 (399 aa).

A compositionally biased stretch (gly residues) spans 1–14 (MPQLSGGGGGGGGD). A CTNNB1-binding region spans residues 1-62 (MPQLSGGGGG…IKSSLVNESE (62 aa)). The segment at 1–104 (MPQLSGGGGG…KHPDGGLYNK (104 aa)) is disordered. 2 stretches are compositionally biased toward basic and acidic residues: residues 24-45 (IPFKDEGDPQKEKIFAEISHPE) and 82-98 (PYHDKAREHPDDGKHPD). A Glycyl lysine isopeptide (Lys-Gly) (interchain with G-Cter in SUMO) cross-link involves residue K27. S132 carries the post-translational modification Phosphoserine. Position 155 is a phosphothreonine; by NLK (T155). A Phosphoserine; by NLK modification is found at S166. Disordered regions lie at residues 166-192 (SPGSHPSHIPSDVNSKQGMSRHPPAPD) and 268-298 (VKQEHPHTDSDLMHVKPQHEQRKEQEPKRPH). A Glycyl lysine isopeptide (Lys-Gly) (interchain with G-Cter in SUMO) cross-link involves residue K269. Residues 269–296 (KQEHPHTDSDLMHVKPQHEQRKEQEPKR) show a composition bias toward basic and acidic residues. Positions 299 to 367 (IKKPLNAFML…LHMQLYPGWS (69 aa)) form a DNA-binding region, HMG box. The segment at 369–399 (RDNYGKKKKRKREKLQESASGTGPRMTAAYI) is disordered.

The protein belongs to the TCF/LEF family. As to quaternary structure, binds the armadillo repeat of CTNNB1 and forms a stable complex. Interacts with EP300, TLE1 and PIASG. Binds ALYREF/THOC4, MDFI and MDFIC. Interacts with NLK. Interacts with DAZAP2. Post-translationally, phosphorylated at Thr-155 and/or Ser-166 by NLK. Phosphorylation by NLK at these sites represses LEF1-mediated transcriptional activation of target genes of the canonical Wnt signaling pathway. As to expression, detected in thymus. Not detected in normal colon, but highly expressed in colon cancer biopsies and colon cancer cell lines. Expressed in several pancreatic tumors and weakly expressed in normal pancreatic tissue. Isoforms 1 and 5 are detected in several pancreatic cell lines.

Its subcellular location is the nucleus. In terms of biological role, transcription factor that binds DNA in a sequence-specific manner. Participates in the Wnt signaling pathway. Activates transcription of target genes in the presence of CTNNB1 and EP300. PIAG antagonizes both Wnt-dependent and Wnt-independent activation by LEF1. TLE1, TLE2, TLE3 and TLE4 repress transactivation mediated by LEF1 and CTNNB1. Regulates T-cell receptor alpha enhancer function. Required for IL17A expressing gamma-delta T-cell maturation and development, via binding to regulator loci of BLK to modulate expression. Acts as a positive regulator of odontoblast differentiation during mesenchymal tooth germ formation, expression is repressed during the bell stage by MSX1-mediated inhibition of CTNNB1 signaling. May play a role in hair cell differentiation and follicle morphogenesis. Functionally, transcriptionally activates MYC and CCND1 expression and enhances proliferation of pancreatic tumor cells. Its function is as follows. Lacks the CTNNB1 interaction domain and may therefore be an antagonist for Wnt signaling. Transcriptionally activates the fibronectin promoter, binds to and represses transcription from the E-cadherin promoter in a CTNNB1-independent manner, and is involved in reducing cellular aggregation and increasing cell migration of pancreatic cancer cells. The sequence is that of Lymphoid enhancer-binding factor 1 from Homo sapiens (Human).